Reading from the N-terminus, the 236-residue chain is Orotidine 5'-phosphate decarboxylase (236 aa).

Substrate is bound by residues D17, K39, 66 to 75, T125, R186, Q195, G215, and R216; that span reads DLKFHDIPNT. Residue K68 is the Proton donor of the active site.

This sequence belongs to the OMP decarboxylase family. Type 1 subfamily. In terms of assembly, homodimer.

It carries out the reaction orotidine 5'-phosphate + H(+) = UMP + CO2. Its pathway is pyrimidine metabolism; UMP biosynthesis via de novo pathway; UMP from orotate: step 2/2. In terms of biological role, catalyzes the decarboxylation of orotidine 5'-monophosphate (OMP) to uridine 5'-monophosphate (UMP). In Buchnera aphidicola subsp. Acyrthosiphon pisum (strain APS) (Acyrthosiphon pisum symbiotic bacterium), this protein is Orotidine 5'-phosphate decarboxylase.